The sequence spans 213 residues: Probable nicotinate-nucleotide adenylyltransferase (213 aa).

Belongs to the NadD family.

The catalysed reaction is nicotinate beta-D-ribonucleotide + ATP + H(+) = deamido-NAD(+) + diphosphate. It functions in the pathway cofactor biosynthesis; NAD(+) biosynthesis; deamido-NAD(+) from nicotinate D-ribonucleotide: step 1/1. Catalyzes the reversible adenylation of nicotinate mononucleotide (NaMN) to nicotinic acid adenine dinucleotide (NaAD). This chain is Probable nicotinate-nucleotide adenylyltransferase, found in Pectobacterium atrosepticum (strain SCRI 1043 / ATCC BAA-672) (Erwinia carotovora subsp. atroseptica).